The sequence spans 276 residues: MGNSMKSTPAPAERPLPNPEGLDSDFLAVLSDYPSPDISPPIFRRGEKLRVISDEGGWWKAISLSTGRESYIPGICVARVYHGWLFEGLGRDKAEELLQLPDTKVGSFMIRESETKKGFYSLSVRHRQVKHYRIFRLPNNWYYISPRLTFQCLEDLVNHYSEVADGLCCVLTTPCLTQSTAAPAVRASSSPVTLRQKTVDWRRVSRLQEDPEGTENPLGVDESLFSYGLRESIASYLSLTSEDNTSFDRKKKSISLMYGGSKRKSSFFSSPPYFED.

The N-myristoyl glycine moiety is linked to residue Gly-2. One can recognise an SH3 domain in the interval 22–82 (LDSDFLAVLS…PGICVARVYH (61 aa)). The 92-residue stretch at 84–175 (WLFEGLGRDK…GLCCVLTTPC (92 aa)) folds into the SH2 domain. The interval 212 to 276 (EGTENPLGVD…FFSSPPYFED (65 aa)) is SLA C-terminal. The residue at position 253 (Ser-253) is a Phosphoserine. Residue Tyr-273 is modified to Phosphotyrosine.

As to quaternary structure, interacts with EPHA2, VAV1, LCP2 and PDGFRB. Homodimer. Homodimerization and interaction with phosphorylated CBL occurs via its C-terminal domain. Interacts with phosphorylated proteins ZAP70, CD3Z, SYK and LAT via its SH2 domain. Expressed in lung and fetal brain. Weakly expressed in heart, adult brain, placenta, liver, skeletal muscle, kidney and pancreas.

It is found in the cytoplasm. It localises to the endosome. Its function is as follows. Adapter protein, which negatively regulates T-cell receptor (TCR) signaling. Inhibits T-cell antigen-receptor induced activation of nuclear factor of activated T-cells. Involved in the negative regulation of positive selection and mitosis of T-cells. May act by linking signaling proteins such as ZAP70 with CBL, leading to a CBL dependent degradation of signaling proteins. The polypeptide is Src-like-adapter (SLA) (Homo sapiens (Human)).